We begin with the raw amino-acid sequence, 337 residues long: Alcohol dehydrogenase (337 aa).

7 residues coordinate Zn(2+): Cys-38, His-61, Cys-92, Cys-95, Cys-98, Cys-106, and Cys-148. NAD(+) contacts are provided by residues Gly-172–Gly-177, Asp-195, Lys-200, Val-260–Leu-262, and Arg-331.

This sequence belongs to the zinc-containing alcohol dehydrogenase family. Zn(2+) serves as cofactor.

It catalyses the reaction a primary alcohol + NAD(+) = an aldehyde + NADH + H(+). It carries out the reaction a secondary alcohol + NAD(+) = a ketone + NADH + H(+). With respect to regulation, substrate inhibition is not observed with any alcohols, and the enzyme-NADH dissociation is not considered to be a rate-limiting step. Functionally, NAD(+)-dependent alcohol dehydrogenase. This chain is Alcohol dehydrogenase (adhT), found in Geobacillus stearothermophilus (Bacillus stearothermophilus).